The chain runs to 628 residues: MSEKKYTFETEVDKLLHLVIHSLYSNREIFLRELVSNSSDAIEKLRYESISNAALNEDDTDYAIRIDFDKDAKTITVSDNGIGMTEEEVIENLGTIAKSGTKKFLESLTGDKSKDNELIGQFGVGFYSSFIVADKVTVRTRKAGQDKSQATKWVSDAQNGFTVETITKEKRGTEVILHIKKEHLDLLEYHVLKGLVNKYSDCINTPIQMKKVEYDKDGKQTVKDEYETVNNTKAIWLRSKDEVTDEEYQEFYKYISHDFADALMWIHNKVEGNLEYNSLLYIPQNKPFDFWNRDKDYGLSLYVRRVFIMENKELLPPYLRFVKGVIDSADLPLNVSREILQHNKVIDKIKKAITTKILSELKKLASKDKEKYQKFWDSFGQVLKEGVSDDYSNKEKIAGLLRFATTQSGDSKQTVSLADYISRMKEGQDTIYYITSDSYKAAANNPQLEAFKKKGIEVILMTDRIDEWMMSTLTEFDGKHMKSIIKGDIDLDKFETPENKEKFEKETKDFEKVLKEIKEVLKDKVEDVRLSKRLTDSPSCVVVNDYGMSLHMQKMMEEAGQGFMPGMGMKPILELNAEHNLVQKLKNEADTEIFADLSELLLLQAMFVEGAKIEDPMAFVKLVNKYIR.

Residues 1-337 form an a; substrate-binding region; it reads MSEKKYTFET…SADLPLNVSR (337 aa). Positions 338 to 554 are b; that stretch reads EILQHNKVID…DYGMSLHMQK (217 aa). Residues 555 to 628 form a c region; the sequence is MMEEAGQGFM…FVKLVNKYIR (74 aa).

The protein belongs to the heat shock protein 90 family. As to quaternary structure, homodimer.

It localises to the cytoplasm. In terms of biological role, molecular chaperone. Has ATPase activity. The polypeptide is Chaperone protein HtpG (Francisella tularensis subsp. novicida (strain U112)).